The primary structure comprises 406 residues: Bifunctional enzyme IspD/IspF (406 aa).

The 2-C-methyl-D-erythritol 4-phosphate cytidylyltransferase stretch occupies residues 1–247 (MSLIRVNGEA…TPFFNPAKDT (247 aa)). A 2-C-methyl-D-erythritol 2,4-cyclodiphosphate synthase region spans residues 248 to 406 (FIGMGFDTHA…HASMRYKQKL (159 aa)). The a divalent metal cation site is built by Asp-254 and His-256. Residues 254–256 (DTH) and 280–281 (HS) each bind 4-CDP-2-C-methyl-D-erythritol 2-phosphate. A divalent metal cation is bound at residue His-288. 4-CDP-2-C-methyl-D-erythritol 2-phosphate is bound by residues 302–304 (DIG), 307–311 (FPDND), 378–381 (TTME), and Phe-385.

This sequence in the N-terminal section; belongs to the IspD/TarI cytidylyltransferase family. IspD subfamily. It in the C-terminal section; belongs to the IspF family. Requires a divalent metal cation as cofactor.

It carries out the reaction 2-C-methyl-D-erythritol 4-phosphate + CTP + H(+) = 4-CDP-2-C-methyl-D-erythritol + diphosphate. It catalyses the reaction 4-CDP-2-C-methyl-D-erythritol 2-phosphate = 2-C-methyl-D-erythritol 2,4-cyclic diphosphate + CMP. It functions in the pathway isoprenoid biosynthesis; isopentenyl diphosphate biosynthesis via DXP pathway; isopentenyl diphosphate from 1-deoxy-D-xylulose 5-phosphate: step 2/6. It participates in isoprenoid biosynthesis; isopentenyl diphosphate biosynthesis via DXP pathway; isopentenyl diphosphate from 1-deoxy-D-xylulose 5-phosphate: step 4/6. Functionally, bifunctional enzyme that catalyzes the formation of 4-diphosphocytidyl-2-C-methyl-D-erythritol from CTP and 2-C-methyl-D-erythritol 4-phosphate (MEP) (IspD), and catalyzes the conversion of 4-diphosphocytidyl-2-C-methyl-D-erythritol 2-phosphate (CDP-ME2P) to 2-C-methyl-D-erythritol 2,4-cyclodiphosphate (ME-CPP) with a corresponding release of cytidine 5-monophosphate (CMP) (IspF). In Helicobacter acinonychis (strain Sheeba), this protein is Bifunctional enzyme IspD/IspF.